A 389-amino-acid polypeptide reads, in one-letter code: Probable transcription factor FL (389 aa).

Disordered stretches follow at residues Met1–Pro41 and Glu140–Val226. The span at Pro19–Asn39 shows a compositional bias: pro residues. Basic residues predominate over residues Val159 to Lys180. Positions Gly161 to Gly168 match the Nuclear localization signal motif. Acidic residues predominate over residues Gln190–Gly201. 3 consecutive DNA-binding regions follow at residues Arg221–Phe225, Asn290–Tyr297, and Tyr361–Thr364.

Belongs to the FLO/LFY family. Interacts with APO1. In terms of tissue distribution, in very young panicle but not in mature florets, mature leaves, roots or apical meristems.

It localises to the nucleus. Functionally, probable transcription factor. Together with APO1, involved in the temporal regulation of meristem size and identity during both vegetative and reproductive developments through interaction with APO1. Promotes flowering. In Oryza sativa subsp. japonica (Rice), this protein is Probable transcription factor FL.